The chain runs to 318 residues: MAAAAAAAAEQQSSNGPVKKSMREKAVERRSVNKEHNSNFKAGYIPIDEDRLHKTGLRGRKGNLAICVIILLFILAVINLIITLVIWAVIRIGPNGCDSMEFHESGLLRFKQVSDMGVIHPLYKSTVGGRRNENLVITGNNQPIVFQQGTTKLSVENNKTSITSDIGMQFFDPRTQNILFSTDYETHEFHLPSGVKSLNVQKASTERITSNATSDLNIKVDGRAIVRGNEGVFIMGKTIEFHMGGNMELKAENSIILNGSVMVSTTRLPSSSSGDQLGSGDWVRYKLCMCADGTLFKVQVTSQNMGCQISDNPCGNTH.

A disordered region spans residues 1–32 (MAAAAAAAAEQQSSNGPVKKSMREKAVERRSV). At 1–65 (MAAAAAAAAE…GLRGRKGNLA (65 aa)) the chain is on the cytoplasmic side. Residues 21–32 (SMREKAVERRSV) show a composition bias toward basic and acidic residues. The chain crosses the membrane as a helical; Signal-anchor for type II membrane protein span at residues 66–86 (ICVIILLFILAVINLIITLVI). Topologically, residues 87 to 318 (WAVIRIGPNG…ISDNPCGNTH (232 aa)) are extracellular. Residues N158, N211, and N258 are each glycosylated (N-linked (GlcNAc...) asparagine). Cystine bridges form between C288–C314 and C290–C307.

It belongs to the sarcoglycan beta/delta/gamma/zeta family. In terms of assembly, cross-link to form 2 major subcomplexes: one consisting of SGCB, SGCD and SGCG and the other consisting of SGCB and SGCD. The association between SGCB and SGCG is particularly strong while SGCA is loosely associated with the other sarcoglycans. In terms of processing, disulfide bonds are present. In terms of tissue distribution, highest expression in heart and skeletal muscle. Low expression in brain, kidney, placenta, pancreas and lung. High expression in fetal brain. Also found in fetal lung, kidney and liver.

The protein resides in the cell membrane. It localises to the sarcolemma. It is found in the cytoplasm. Its subcellular location is the cytoskeleton. In terms of biological role, component of the sarcoglycan complex, a subcomplex of the dystrophin-glycoprotein complex which forms a link between the F-actin cytoskeleton and the extracellular matrix. This is Beta-sarcoglycan (SGCB) from Homo sapiens (Human).